We begin with the raw amino-acid sequence, 387 residues long: Sharpin (387 aa).

Residues 1–180 (MAPPAGGAAA…EREELAGSLA (180 aa)) form a self-association region. The segment covering 122-132 (EGQNGSKSNSP) has biased composition (polar residues). Positions 122 to 169 (EGQNGSKSNSPPALGPEACPVSLPSPPEASTLKGPPPEADLPRSPGNL) are disordered. Ser-165 bears the Phosphoserine mark. Residues 175–310 (LAGSLARAIA…SAPREAPATG (136 aa)) are interaction with SHANK1. Positions 219 to 288 (IRLQVTLEDA…PERSLASYGV (70 aa)) constitute a Ubiquitin-like domain. Positions 305 to 349 (EAPATGPSPQHPQKMDGELGRLFPPSLGLPPGPQPAASSLPSPLQ) are disordered. Ser-312 carries the phosphoserine modification. The span at 339 to 349 (PAASSLPSPLQ) shows a compositional bias: low complexity. The segment at 348-377 (LQPSWSCPSCTFINAPDRPGCEMCSTQRPC) adopts a RanBP2-type zinc-finger fold.

As to quaternary structure, monomer and homodimer. Component of the LUBAC complex (linear ubiquitin chain assembly complex) which consists of SHARPIN, RBCK1 and RNF31. LUBAC has a MW of approximately 600 kDa suggesting a heteromultimeric assembly of its subunits. Associates with the TNF-R1 signaling complex (TNF-RSC) in a stimulation-dependent manner. Interacts with EYA1, EYA2, SHANK1 and SHANK3 (via ANK repeats). Highly expressed in skeletal muscle and placenta and at lower levels in brain, heart, colon without mucosa, thymus, spleen, kidney, liver, small intestine, lung and peripheral blood leukocytes. Up-regulated in various tumor tissues such as kidney, liver, ovary and pancreas tumors.

It is found in the cytoplasm. Its subcellular location is the cytosol. It localises to the synapse. Its pathway is protein modification; protein ubiquitination. Component of the LUBAC complex which conjugates linear polyubiquitin chains in a head-to-tail manner to substrates and plays a key role in NF-kappa-B activation and regulation of inflammation. LUBAC conjugates linear polyubiquitin to IKBKG and RIPK1 and is involved in activation of the canonical NF-kappa-B and the JNK signaling pathways. Linear ubiquitination mediated by the LUBAC complex interferes with TNF-induced cell death and thereby prevents inflammation. LUBAC is recruited to the TNF-R1 signaling complex (TNF-RSC) following polyubiquitination of TNF-RSC components by BIRC2 and/or BIRC3 and to conjugate linear polyubiquitin to IKBKG and possibly other components contributing to the stability of the complex. The LUBAC complex is also involved in innate immunity by conjugating linear polyubiquitin chains at the surface of bacteria invading the cytosol to form the ubiquitin coat surrounding bacteria. LUBAC is not able to initiate formation of the bacterial ubiquitin coat, and can only promote formation of linear polyubiquitins on pre-existing ubiquitin. The bacterial ubiquitin coat acts as an 'eat-me' signal for xenophagy and promotes NF-kappa-B activation. Together with OTULIN, the LUBAC complex regulates the canonical Wnt signaling during angiogenesis. This chain is Sharpin, found in Homo sapiens (Human).